The primary structure comprises 374 residues: tRNA-specific 2-thiouridylase MnmA (374 aa).

Residues 16–23 and M42 contribute to the ATP site; that span reads GMSGGVDS. The tract at residues 102–104 is interaction with target base in tRNA; sequence NPD. The active-site Nucleophile is the C107. Residues C107 and C203 are joined by a disulfide bond. ATP is bound at residue G131. The tract at residues 153 to 155 is interaction with tRNA; the sequence is KDQ. C203 (cysteine persulfide intermediate) is an active-site residue. The segment at 311–312 is interaction with tRNA; that stretch reads RY.

It belongs to the MnmA/TRMU family.

Its subcellular location is the cytoplasm. The catalysed reaction is S-sulfanyl-L-cysteinyl-[protein] + uridine(34) in tRNA + AH2 + ATP = 2-thiouridine(34) in tRNA + L-cysteinyl-[protein] + A + AMP + diphosphate + H(+). Functionally, catalyzes the 2-thiolation of uridine at the wobble position (U34) of tRNA, leading to the formation of s(2)U34. This chain is tRNA-specific 2-thiouridylase MnmA, found in Exiguobacterium sibiricum (strain DSM 17290 / CCUG 55495 / CIP 109462 / JCM 13490 / 255-15).